The following is a 232-amino-acid chain: MAKVGKRTRAAREAFVGKDMVSVEDAVALIKGAASAKFDETLEVAMNLGVDPRHADQMVRGVVTLPNGTGKTVRVAVFARGAKADEAKAAGADIVGAEDLMETIQSGKIEFDRCIATPDMMPLVGRLGKILGPRNLMPNPKVGTVTMDVAGAVGNAKGGEVQFKVEKAGVIHAGVGKISFDAEKLAQNVRAFVDAVNRAKPAGAKGTYLKKVSLSSTMGPGVSVDLASATSH.

Belongs to the universal ribosomal protein uL1 family. Part of the 50S ribosomal subunit.

In terms of biological role, binds directly to 23S rRNA. The L1 stalk is quite mobile in the ribosome, and is involved in E site tRNA release. Functionally, protein L1 is also a translational repressor protein, it controls the translation of the L11 operon by binding to its mRNA. The polypeptide is Large ribosomal subunit protein uL1 (Cereibacter sphaeroides (strain ATCC 17025 / ATH 2.4.3) (Rhodobacter sphaeroides)).